A 124-amino-acid chain; its full sequence is Holo-[acyl-carrier-protein] synthase (124 aa).

The Mg(2+) site is built by aspartate 7 and glutamate 55.

It belongs to the P-Pant transferase superfamily. AcpS family. The cofactor is Mg(2+).

It localises to the cytoplasm. It carries out the reaction apo-[ACP] + CoA = holo-[ACP] + adenosine 3',5'-bisphosphate + H(+). Functionally, transfers the 4'-phosphopantetheine moiety from coenzyme A to a Ser of acyl-carrier-protein. The chain is Holo-[acyl-carrier-protein] synthase from Borrelia garinii subsp. bavariensis (strain ATCC BAA-2496 / DSM 23469 / PBi) (Borreliella bavariensis).